Here is a 217-residue protein sequence, read N- to C-terminus: Transcriptional regulatory protein CutR (217 aa).

Residues 2–116 (RVLVVEDEQL…ELIARVRALG (115 aa)) enclose the Response regulatory domain. Asp-51 is modified (4-aspartylphosphate). The ompR/PhoB-type DNA-binding region spans 124–217 (PPVLERAGIK…VTVPGSGYRI (94 aa)).

In terms of biological role, member of the two-component regulatory system CutS/CutR, involved in the regulation of copper metabolism. CutR suppresses a defective melC1 gene, encoding a putative copper-transfer gene, probably by altering copper metabolism. The chain is Transcriptional regulatory protein CutR (cutR) from Streptomyces lividans.